A 399-amino-acid polypeptide reads, in one-letter code: Probable peptidoglycan glycosyltransferase FtsW (399 aa).

Transmembrane regions (helical) follow at residues 33–53, 71–91, 98–118, 160–180, 182–202, 204–224, 287–307, 324–344, and 359–379; these read LVWLTLGLFSVGLIMVISTSI, IFYFFLIFLLSFIFLRTPIIF, IILIISIVLLVLVLLIGHSIH, FWGFFKPMSVIITQSMLLLAE, DLGTVVVLFFTTISVLFLSGA, IGQFFIIITVSILTIILLILL, IIGEELGYIGSFLILLIIFTI, IFSGFLACSIGIWLSFQTSIN, and LPFISYGGSSLIINSIAIFFL.

The protein belongs to the SEDS family. FtsW subfamily.

It localises to the cell inner membrane. The catalysed reaction is [GlcNAc-(1-&gt;4)-Mur2Ac(oyl-L-Ala-gamma-D-Glu-L-Lys-D-Ala-D-Ala)](n)-di-trans,octa-cis-undecaprenyl diphosphate + beta-D-GlcNAc-(1-&gt;4)-Mur2Ac(oyl-L-Ala-gamma-D-Glu-L-Lys-D-Ala-D-Ala)-di-trans,octa-cis-undecaprenyl diphosphate = [GlcNAc-(1-&gt;4)-Mur2Ac(oyl-L-Ala-gamma-D-Glu-L-Lys-D-Ala-D-Ala)](n+1)-di-trans,octa-cis-undecaprenyl diphosphate + di-trans,octa-cis-undecaprenyl diphosphate + H(+). The protein operates within cell wall biogenesis; peptidoglycan biosynthesis. Functionally, peptidoglycan polymerase that is essential for cell division. This is Probable peptidoglycan glycosyltransferase FtsW from Buchnera aphidicola subsp. Acyrthosiphon pisum (strain APS) (Acyrthosiphon pisum symbiotic bacterium).